We begin with the raw amino-acid sequence, 191 residues long: MAAERERGGRERSRDREERDSEFVDKLVHINRVAKVVKGGKRFGFAALVVIGDQKGRVGFGHGKAREVPEAIRKATEAAKRNLTRVALREGRTLHHDIAGRHGAGRVYLRAAPAGTGIIAGGPMRAVFETLGIQDVVAKSIGSSNPYNMVRATFDALKHVDSPRSVAARRNIKVSTLQARRVGGDAEVVAE.

The segment at 1–20 is disordered; sequence MAAERERGGRERSRDREERD. The region spanning 23–86 is the S5 DRBM domain; that stretch reads FVDKLVHINR…EAAKRNLTRV (64 aa).

The protein belongs to the universal ribosomal protein uS5 family. As to quaternary structure, part of the 30S ribosomal subunit. Contacts proteins S4 and S8.

With S4 and S12 plays an important role in translational accuracy. Its function is as follows. Located at the back of the 30S subunit body where it stabilizes the conformation of the head with respect to the body. This is Small ribosomal subunit protein uS5 from Rhodopseudomonas palustris (strain HaA2).